A 266-amino-acid chain; its full sequence is Protein PYRICULARIA ORYZAE RESISTANCE 21 (266 aa).

An HMA domain is found at 1–68 (MGILVILVDL…IWCKAGKIIK (68 aa)). A metal cation is bound by residues cysteine 12 and cysteine 15. A disordered region spans residues 129–156 (CEKPKPCEKPPPCKPEEPPKPPPEKPPP). Positions 142-156 (KPEEPPKPPPEKPPP) are enriched in basic and acidic residues.

In terms of biological role, involved in defense responses. Contributes to slowing defense responses toward Magnaporthe oryzae. In Oryza sativa subsp. japonica (Rice), this protein is Protein PYRICULARIA ORYZAE RESISTANCE 21.